The primary structure comprises 377 residues: Succinyl-diaminopimelate desuccinylase (377 aa).

His68 serves as a coordination point for Zn(2+). The active site involves Asp70. Asp101 provides a ligand contact to Zn(2+). Glu135 serves as the catalytic Proton acceptor. Zn(2+)-binding residues include Glu136, Glu164, and His350.

The protein belongs to the peptidase M20A family. DapE subfamily. In terms of assembly, homodimer. It depends on Zn(2+) as a cofactor. Co(2+) serves as cofactor.

It catalyses the reaction N-succinyl-(2S,6S)-2,6-diaminopimelate + H2O = (2S,6S)-2,6-diaminopimelate + succinate. Its pathway is amino-acid biosynthesis; L-lysine biosynthesis via DAP pathway; LL-2,6-diaminopimelate from (S)-tetrahydrodipicolinate (succinylase route): step 3/3. In terms of biological role, catalyzes the hydrolysis of N-succinyl-L,L-diaminopimelic acid (SDAP), forming succinate and LL-2,6-diaminopimelate (DAP), an intermediate involved in the bacterial biosynthesis of lysine and meso-diaminopimelic acid, an essential component of bacterial cell walls. This is Succinyl-diaminopimelate desuccinylase from Psychromonas ingrahamii (strain DSM 17664 / CCUG 51855 / 37).